A 1212-amino-acid polypeptide reads, in one-letter code: uncharacterized protein (1212 aa).

Residues 1-31 (MASIQTKLVSQPQTQQPLQNGFFNNYQQNIY) are compositionally biased toward polar residues. 7 disordered regions span residues 1–70 (MASI…HLQQ), 119–169 (PQAQ…FGTN), 211–231 (SLNNSLNSSGNNSTLNTSNNN), 248–374 (INIG…NNNK), 655–681 (QQQPQQLNQNPPNQQLPQQPNQITQQQ), 935–957 (NQNQNNNNNNNNNNNNNINCNNA), and 973–1125 (QLQP…QQLQ). Composition is skewed to low complexity over residues 48 to 70 (PQQQPILPQQPQPQSQQPLHLQQ) and 119 to 163 (PQAQ…NNNN). Residues 256–275 (NNSNTNNVNNINTNNTNNNN) show a composition bias toward low complexity. 2 stretches are compositionally biased toward polar residues: residues 276–285 (KSGSIDQFGS) and 292–317 (YVNSSSNSAIPTPPTNQTNGSNSHSP). Residues 322-340 (INSNININSNLQSPQNIQQ) are compositionally biased toward low complexity. Positions 341 to 351 (TILSPNISPNH) are enriched in polar residues. Over residues 352–373 (NNNNNNNNNNNNNNNNNNNNNN) the composition is skewed to low complexity. Composition is skewed to low complexity over residues 998–1022 (NSVNNNINNNFINNNSFVNNNNNNN) and 1037–1125 (QNNN…QQLQ).

This is an uncharacterized protein from Dictyostelium discoideum (Social amoeba).